The primary structure comprises 81 residues: Photosystem I iron-sulfur center (81 aa).

4Fe-4S ferredoxin-type domains follow at residues 2 to 31 (SHSVKIYDTCIGCTQCVRACPTDVLEMIPW) and 39 to 68 (IASAPRTEDCVGCKRCESACPTDFLSVRVS). [4Fe-4S] cluster contacts are provided by C11, C14, C17, C21, C48, C51, C54, and C58.

In terms of assembly, the eukaryotic PSI reaction center is composed of at least 11 subunits. It depends on [4Fe-4S] cluster as a cofactor.

It localises to the plastid. The protein localises to the chloroplast thylakoid membrane. It carries out the reaction reduced [plastocyanin] + hnu + oxidized [2Fe-2S]-[ferredoxin] = oxidized [plastocyanin] + reduced [2Fe-2S]-[ferredoxin]. Its function is as follows. Apoprotein for the two 4Fe-4S centers FA and FB of photosystem I (PSI); essential for photochemical activity. FB is the terminal electron acceptor of PSI, donating electrons to ferredoxin. The C-terminus interacts with PsaA/B/D and helps assemble the protein into the PSI complex. Required for binding of PsaD and PsaE to PSI. PSI is a plastocyanin-ferredoxin oxidoreductase, converting photonic excitation into a charge separation, which transfers an electron from the donor P700 chlorophyll pair to the spectroscopically characterized acceptors A0, A1, FX, FA and FB in turn. The polypeptide is Photosystem I iron-sulfur center (Daucus carota (Wild carrot)).